Reading from the N-terminus, the 423-residue chain is Histidine--tRNA ligase (423 aa).

It belongs to the class-II aminoacyl-tRNA synthetase family. In terms of assembly, homodimer.

Its subcellular location is the cytoplasm. The enzyme catalyses tRNA(His) + L-histidine + ATP = L-histidyl-tRNA(His) + AMP + diphosphate + H(+). The polypeptide is Histidine--tRNA ligase (Orientia tsutsugamushi (strain Boryong) (Rickettsia tsutsugamushi)).